The sequence spans 400 residues: Deoxyguanosinetriphosphate triphosphohydrolase-like protein (400 aa).

Residues 73–215 form the HD domain; sequence RLTHSIEVSQ…AAIADDIAYN (143 aa).

Belongs to the dGTPase family. Type 2 subfamily.

In Bartonella tribocorum (strain CIP 105476 / IBS 506), this protein is Deoxyguanosinetriphosphate triphosphohydrolase-like protein.